The primary structure comprises 224 residues: MRSELFAYDRFYKQNFGTVIGVDEAGRGCLAGPVVAAAVILEVQLDVFDSKQLTAQKREELFLQIMNSAEVGIGIATPEEIDLYNIFNATKIAMNRALASLNKKDAYVLVDGKSLNLSQQGVCIVKGDEKSASIAAASIVAKVLRDRIMVAHDRIYPCYGFSKHKGYGTVHHLNAIREFGPTVFHRLSFSPVLSNLSVKKVHDLFSENINCERAKVILRKLSSS.

Positions G17 to V201 constitute an RNase H type-2 domain. The a divalent metal cation site is built by D23, E24, and D111.

Belongs to the RNase HII family. It depends on Mn(2+) as a cofactor. Mg(2+) is required as a cofactor.

Its subcellular location is the cytoplasm. The catalysed reaction is Endonucleolytic cleavage to 5'-phosphomonoester.. Endonuclease that specifically degrades the RNA of RNA-DNA hybrids. The chain is Ribonuclease HII from Pseudothermotoga lettingae (strain ATCC BAA-301 / DSM 14385 / NBRC 107922 / TMO) (Thermotoga lettingae).